The primary structure comprises 309 residues: Dioxygenase af480 (309 aa).

The Fe cation site is built by His153, Asp155, and His228.

This sequence belongs to the PhyH family. Fe cation is required as a cofactor.

It catalyses the reaction 5-dehydro-6-demethoxyfumagillol + 2-oxoglutarate + O2 = 5-dehydro-6-demethoxy-6-hydroxyfumagillol + succinate + CO2. Its pathway is secondary metabolite biosynthesis; terpenoid biosynthesis. Its function is as follows. Dioxygenase; part of the gene cluster that mediates the biosynthesis of fumagillin, a meroterpenoid that has numerous biological activities including irreversible inhibition of human type 2 methionine aminopeptidase (METAP2). Within the pathway, the dioxygenase af480 acts as a 5-dehydro-6-demethoxyfumagillol dioxygenase that hydroylates 5-keto-demethoxyfumagillol at position C-6. The pathway begins with the conversion of farnesyl pyrophosphate (FPP) to beta-trans-bergamotene by the membrane-bound beta-trans-bergamotene synthase af520. The multifunctional cytochrome P450 monooxygenase af510 then converts beta-trans-bergamotene into 5-keto-demethoxyfumagillol via several oxydation steps. 5-keto-demethoxyfumagillol is then subjected to successive C-6 hydroxylation and O-methylation by the dioxygenase af480 and O-methyltransferase af390-400, respectively, to yield 5-keto-fumagillol, which is then stereoselectively reduced by the keto-reductase af490 to 5R-hydroxy-seco-sesquiterpene. The next step is the polyketide transferase af380-catalyzed transfer of a dodecapentaenoyl group synthesized by the polyketide synthase af370 onto 5R-hydroxy-seco-sesquiterpene which leads to the production of prefumagillin. Finally, oxidative cleavage by the monooxygenase af470 converts prefumagillin to fumagillin. In Aspergillus fumigatus (strain ATCC MYA-4609 / CBS 101355 / FGSC A1100 / Af293) (Neosartorya fumigata), this protein is Dioxygenase af480.